The chain runs to 46 residues: DNA-directed RNA polymerase subunit Rpo12 (46 aa).

Positions 8, 23, and 26 each coordinate Zn(2+).

It belongs to the archaeal Rpo12/eukaryotic RPC10 RNA polymerase subunit family. As to quaternary structure, part of the RNA polymerase complex. Zn(2+) serves as cofactor.

Its subcellular location is the cytoplasm. It catalyses the reaction RNA(n) + a ribonucleoside 5'-triphosphate = RNA(n+1) + diphosphate. Its function is as follows. DNA-dependent RNA polymerase (RNAP) catalyzes the transcription of DNA into RNA using the four ribonucleoside triphosphates as substrates. In Archaeoglobus fulgidus (strain ATCC 49558 / DSM 4304 / JCM 9628 / NBRC 100126 / VC-16), this protein is DNA-directed RNA polymerase subunit Rpo12.